A 212-amino-acid polypeptide reads, in one-letter code: Ribonuclease HII (212 aa).

Residues 1–199 form the RNase H type-2 domain; that stretch reads MIGGIDEAGR…VGGRIGLGRN (199 aa). Positions 6, 7, and 101 each coordinate a divalent metal cation.

Belongs to the RNase HII family. Mn(2+) serves as cofactor. The cofactor is Mg(2+).

The protein localises to the cytoplasm. It catalyses the reaction Endonucleolytic cleavage to 5'-phosphomonoester.. Endonuclease that specifically degrades the RNA of RNA-DNA hybrids. In Pyrobaculum aerophilum (strain ATCC 51768 / DSM 7523 / JCM 9630 / CIP 104966 / NBRC 100827 / IM2), this protein is Ribonuclease HII.